The sequence spans 202 residues: MGVEIKGLTVPALLIKLDPSKSLQENIDELKQKLSSAFFKGSYAVVDYNGLELNEESKVEIEKVLKDFNASVLGFQNTKNNKESLKGVTQKKSLKIINKTLRSGQKVEYDGDVLILGDVNPDAYVVSSGSVIVMGNLRGVVHAGANGDETAVVMALKLRPQQIRISNYIARSPDEPDVKAEESNSPEIAYIENNAIVIDKIK.

The protein belongs to the MinC family. In terms of assembly, interacts with MinD and FtsZ.

Cell division inhibitor that blocks the formation of polar Z ring septums. Rapidly oscillates between the poles of the cell to destabilize FtsZ filaments that have formed before they mature into polar Z rings. Prevents FtsZ polymerization. The chain is Probable septum site-determining protein MinC from Sulfurihydrogenibium sp. (strain YO3AOP1).